The chain runs to 69 residues: Large ribosomal subunit protein uL30 (69 aa).

The protein belongs to the universal ribosomal protein uL30 family. As to quaternary structure, part of the 50S ribosomal subunit.

This is Large ribosomal subunit protein uL30 from Rhizobium etli (strain CIAT 652).